The following is a 295-amino-acid chain: MKKYLALAAIVAICALWLTQNSNFEAGKTFKLFDSGKTAILRPVIYYNLPNGSVIEVRDSNPFPFTIELASGGLGINAPSKSLEVYTYETYKKPEEIKVIAKSFGASLDKLYYNEITHAYLYNDEKLSFEYYPNTGYLRILFKNSSLEKASILNGLLNYSYQKIEKNGGVFYARNFDGLSSNVGLLVKSDEKGIRSIEGILLKSVKLKGKYELIPIDRIPEMLEKRVKGDLKADDWYLSNIAFTKLTLTNVSLMYTITPDGILPVYWFEGKYELDFEGIKDSGTVEGRIVAVSAN.

The N-terminal stretch at 1–26 (MKKYLALAAIVAICALWLTQNSNFEA) is a signal peptide.

This is an uncharacterized protein from Archaeoglobus fulgidus (strain ATCC 49558 / DSM 4304 / JCM 9628 / NBRC 100126 / VC-16).